The following is a 298-amino-acid chain: Specificity protein transcription factor 1 (298 aa).

The segment covering 206 to 218 has biased composition (low complexity); sequence VSSGSESVSARGT. Residues 206–233 form a disordered region; it reads VSSGSESVSARGTSGSGGTGKYPSSRTA. The C2H2-type zinc-finger motif lies at 260–284; that stretch reads HNCHIAGCGKVYNKSSHLKAHLRWH.

This sequence belongs to the Sp1 C2H2-type zinc-finger protein family. As to expression, expressed in ASJ sensory neurons, pharyngeal cells, rectal cells, intestine, seam cells, and vulval cells.

Its function is as follows. Probable transcription factor which modulates gene expression, thereby acting as an ASJ sensory neuron terminal selector gene. This is Specificity protein transcription factor 1 from Caenorhabditis elegans.